The chain runs to 699 residues: Osmotic avoidance abnormal protein 3 (699 aa).

Residues 4 to 327 (SVRVAVRCRP…LRYANRAKNI (324 aa)) enclose the Kinesin motor domain. An ATP-binding site is contributed by 87–94 (GQTGSGKT). Residues 339–523 (DALLREYQEE…EIEDLHGEFE (185 aa)) adopt a coiled-coil conformation.

This sequence belongs to the TRAFAC class myosin-kinesin ATPase superfamily. Kinesin family. Kinesin II subfamily. In terms of tissue distribution, expressed in an exclusive set of 26 chemosensory neurons whose dendritic endings are exposed to the external environment; six IL2 neurons of the inner labial sensilla, 8 pairs of amphid neurons in the head, and 2 pairs of phasmid neurons in the tail.

The protein resides in the cytoplasm. Its subcellular location is the cytoskeleton. It is found in the cell projection. It localises to the cilium. The protein localises to the cilium axoneme. The protein resides in the cilium basal body. Its function is as follows. Kinesin motor protein which is required for the anterograde intraflagellar transport (IFT) along the middle segment of the sensory neuron cilia together with the kinesin II motor complex (composed of klp-11, klp-20 and kap-1) and on its own, is required for IFT along the distal segment. In addition, regulates the length of cilia. May have a role during neurogenesis and axonal transport. This chain is Osmotic avoidance abnormal protein 3, found in Caenorhabditis elegans.